Here is a 73-residue protein sequence, read N- to C-terminus: Large ribosomal subunit protein uL24 (73 aa).

The span at 53–65 (NPKGGFIKKEKPM) shows a compositional bias: basic and acidic residues. Residues 53–73 (NPKGGFIKKEKPMHISNVKKA) are disordered.

This sequence belongs to the universal ribosomal protein uL24 family. As to quaternary structure, part of the 50S ribosomal subunit.

Functionally, one of two assembly initiator proteins, it binds directly to the 5'-end of the 23S rRNA, where it nucleates assembly of the 50S subunit. One of the proteins that surrounds the polypeptide exit tunnel on the outside of the subunit. The chain is Large ribosomal subunit protein uL24 from Helicobacter pylori (strain J99 / ATCC 700824) (Campylobacter pylori J99).